The following is a 127-amino-acid chain: Large ribosomal subunit protein bL17 (127 aa).

This sequence belongs to the bacterial ribosomal protein bL17 family. In terms of assembly, part of the 50S ribosomal subunit. Contacts protein L32.

This is Large ribosomal subunit protein bL17 from Stenotrophomonas maltophilia (strain K279a).